The primary structure comprises 376 residues: MHLLKVGTWRNNTASSWLMKFSVLWLVSQNCCRASVVWMAYMNISFHVGNHVLSELGETGVFGRSSTLKRVAGVIVPPEGKIQNACNPNTIFSRSKYSETWLALIERGGCTFTQKIKVATEKGASGVIIYNVPGTGNQVFPMFHQAFEDVVVVMIGNLKGTEIFHLIKKGVLITAVVEVGRKHIIWMNHYLVSFVIVTTATLAYFIFYHIHRLCLARIQNRRWQRLTTDLQNTFGQLQLRVVKEGDEEINPNGDSCVICFERYKPNDIVRILTCKHFFHKNCIDPWILPHGTCPICKCDILKVLGIQVVVENGTEPLQVLMSNELPETLSPSEEETNNEVSPAGTSDKVIHVEENPTSQNNDIQPHSVVEDVHPSP.

The PA domain occupies 65-167; the sequence is SSTLKRVAGV…LKGTEIFHLI (103 aa). Residues 190–210 traverse the membrane as a helical segment; the sequence is YLVSFVIVTTATLAYFIFYHI. The RING-type; atypical zinc finger occupies 256-297; it reads CVICFERYKPNDIVRILTCKHFFHKNCIDPWILPHGTCPICK. A disordered region spans residues 327 to 376; it reads ETLSPSEEETNNEVSPAGTSDKVIHVEENPTSQNNDIQPHSVVEDVHPSP. Residues 355-364 are compositionally biased toward polar residues; that stretch reads NPTSQNNDIQ.

As to quaternary structure, interacts with E3 ligase UBE2J1. Auto-ubiquitinated. In terms of tissue distribution, expression is testis-specific.

It is found in the endoplasmic reticulum membrane. The enzyme catalyses S-ubiquitinyl-[E2 ubiquitin-conjugating enzyme]-L-cysteine + [acceptor protein]-L-lysine = [E2 ubiquitin-conjugating enzyme]-L-cysteine + N(6)-ubiquitinyl-[acceptor protein]-L-lysine.. Its pathway is protein modification; protein ubiquitination. Its function is as follows. Has E3 ubiquitin-protein ligase activity. Plays a role in male fecundity through the interaction with the E2 ubituitin-protein ligase UBE2J1. The protein is E3 ubiquitin-protein ligase RNF133 of Homo sapiens (Human).